A 186-amino-acid polypeptide reads, in one-letter code: Photosystem I assembly protein Ycf4 (186 aa).

2 helical membrane passes run 26–46 and 66–86; these read WATI…SSYF and IVMT…WLTI.

The protein belongs to the Ycf4 family.

The protein resides in the plastid. Its subcellular location is the chloroplast thylakoid membrane. Its function is as follows. Seems to be required for the assembly of the photosystem I complex. This is Photosystem I assembly protein Ycf4 from Pyropia yezoensis (Susabi-nori).